An 82-amino-acid chain; its full sequence is Mu-conotoxin MrVIA (82 aa).

The N-terminal stretch at 1-22 (MKLTCMMIVAVLFLTAWTLVMA) is a signal peptide. The propeptide occupies 23–49 (DDSNNGLANHFSKSRDEMEDPEASKLE). 3 disulfides stabilise this stretch: C53/C71, C60/C76, and C70/C81.

In terms of tissue distribution, expressed by the venom duct.

The protein resides in the secreted. MuO-conotoxins are gating-modifier toxins that inhibit sodium current by trapping the domain II voltage sensor in the closed position to prevent opening of the sodium channel. This toxin inhibits rNav1.2/SCN2A (IC(50)=532 nM), rNav1.4/SCN4A (IC(50)=438 nM) and rNav1.7/SCN9A (IC(50)=345 nM). It blocks Nav channels by interacting mainly with the C-terminal part of the pore loop of domain-3. It does not bind on site 1. At small concentration, this toxin also acts as a calcium current agonist, whereas at higher doses it blocks fast-inactivating calcium current. The sequence is that of Mu-conotoxin MrVIA from Conus marmoreus (Marble cone).